Consider the following 397-residue polypeptide: Argininosuccinate synthase (397 aa).

A9–S17 provides a ligand contact to ATP. Y86 contributes to the L-citrulline binding site. Residue G116 participates in ATP binding. Positions 118, 122, and 123 each coordinate L-aspartate. N122 provides a ligand contact to L-citrulline. Residues R126, S174, E259, and Y271 each contribute to the L-citrulline site.

This sequence belongs to the argininosuccinate synthase family. Type 1 subfamily. In terms of assembly, homotetramer.

It is found in the cytoplasm. It carries out the reaction L-citrulline + L-aspartate + ATP = 2-(N(omega)-L-arginino)succinate + AMP + diphosphate + H(+). It participates in amino-acid biosynthesis; L-arginine biosynthesis; L-arginine from L-ornithine and carbamoyl phosphate: step 2/3. In Lactococcus lactis subsp. cremoris (strain MG1363), this protein is Argininosuccinate synthase.